Here is a 336-residue protein sequence, read N- to C-terminus: D-alanine--D-alanine ligase (336 aa).

The 207-residue stretch at 124-330 (KMWFSALGIP…FTEYLSLVIN (207 aa)) folds into the ATP-grasp domain. An ATP-binding site is contributed by 154 to 209 (ALENWGSIFVKAASQGSSVGCYKVDDSSKVAGVLKDAFGYAPYVIVEKTIKARELE). Mg(2+) is bound by residues D284, E297, and N299.

This sequence belongs to the D-alanine--D-alanine ligase family. Mg(2+) is required as a cofactor. Requires Mn(2+) as cofactor.

The protein resides in the cytoplasm. The catalysed reaction is 2 D-alanine + ATP = D-alanyl-D-alanine + ADP + phosphate + H(+). It functions in the pathway cell wall biogenesis; peptidoglycan biosynthesis. In terms of biological role, cell wall formation. This chain is D-alanine--D-alanine ligase, found in Shewanella sp. (strain MR-4).